Here is a 628-residue protein sequence, read N- to C-terminus: FAD-linked oxidoreductase easE (628 aa).

Positions 1 to 20 (MSHRILCVAFCVCSLVAVSS) are cleaved as a signal peptide. Residues 144–328 (HQGRIPLYSA…TRATMRVHLN (185 aa)) enclose the FAD-binding PCMH-type domain. Histidine 182 is modified (pros-8alpha-FAD histidine). Residues asparagine 343, asparagine 382, and asparagine 487 are each glycosylated (N-linked (GlcNAc...) asparagine).

Belongs to the oxygen-dependent FAD-linked oxidoreductase family. It depends on FAD as a cofactor.

The protein operates within alkaloid biosynthesis; ergot alkaloid biosynthesis. FAD binding oxidoreductase; part of the gene cluster that mediates the biosynthesis of fumiclavanine C, a fungal ergot alkaloid. DmaW catalyzes the first step of ergot alkaloid biosynthesis by condensing dimethylallyl diphosphate (DMAP) and tryptophan to form 4-dimethylallyl-L-tryptophan. The second step is catalyzed by the methyltransferase easF that methylates 4-dimethylallyl-L-tryptophan in the presence of S-adenosyl-L-methionine, resulting in the formation of 4-dimethylallyl-L-abrine. The catalase easC and the FAD-dependent oxidoreductase easE then transform 4-dimethylallyl-L-abrine to chanoclavine-I which is further oxidized by EasD in the presence of NAD(+), resulting in the formation of chanoclavine-I aldehyde. EasA reduces chanoclavine-I aldehyde to dihydrochanoclavine-I aldehyde that spontaneously dehydrates to form 6,8-dimethyl-6,7-didehydroergoline. EasG then catalyzes the reduction of 6,8-dimethyl-6,7-didehydroergoline to form festuclavine. Hydrolysis of festuclavine by easM then leads to the formation of fumigaclavine B which is in turn acetylated by easN to fumigaclavine A. Finally, easL catalyzes the conversion of fumigaclavine A into fumigaclavine C by attaching a dimethylallyl moiety to C-2 of the indole nucleus. In Aspergillus fumigatus (strain ATCC MYA-4609 / CBS 101355 / FGSC A1100 / Af293) (Neosartorya fumigata), this protein is FAD-linked oxidoreductase easE.